Consider the following 940-residue polypeptide: Nitrogen permease regulator 3 (940 aa).

Residues 1–21 (MYTNLPKACLTGIVLTISTHS) form the signal peptide. Over residues 37-52 (EARRGRKVDSRNERVR) the composition is skewed to basic and acidic residues. Disordered stretches follow at residues 37 to 155 (EARR…PSES), 317 to 387 (RKQK…EQSD), and 812 to 848 (EHRQNPHDNVAAPTREPASSAIDETASSSEHGDANIS). Low complexity predominate over residues 61–72 (SAASGAVDAVGE). A compositionally biased stretch (acidic residues) spans 75–84 (DGLEEESSES). The span at 123 to 133 (SSAVGGSSAAE) shows a compositional bias: low complexity. 2 stretches are compositionally biased toward polar residues: residues 324–336 (QQTNTRSKRSSSG) and 355–378 (ERQPSTDQSGSGAPYLAQSSSESG).

It belongs to the NPR3 family.

Mediates inactivation of the TORC1 complex in response to amino acid starvation. Required for meiotic nuclear division. The sequence is that of Nitrogen permease regulator 3 (NPR3) from Eremothecium gossypii (strain ATCC 10895 / CBS 109.51 / FGSC 9923 / NRRL Y-1056) (Yeast).